Reading from the N-terminus, the 121-residue chain is Neuromedin-B (121 aa).

A signal peptide spans 1–24 (MTLRAVGVRLLGGLLLFALLAAGA). Met56 carries the post-translational modification Methionine amide. Residues 60–121 (SLEPPSPSLL…RRLLVQTLQK (62 aa)) constitute a propeptide that is removed on maturation. Positions 61 to 80 (LEPPSPSLLGTAPHTSLRDQ) are disordered.

The protein belongs to the bombesin/neuromedin-B/ranatensin family.

It localises to the secreted. It is found in the cell projection. The protein resides in the neuron projection. Stimulates smooth muscle contraction. Induces sighing by acting directly on the pre-Botzinger complex, a cluster of several thousand neurons in the ventrolateral medulla responsible for inspiration during respiratory activity. Contributes to the induction of sneezing following exposure to chemical irritants or allergens which causes release of NMB by nasal sensory neurons and activation of NMBR-expressing neurons in the sneeze-evoking region of the brainstem. These in turn activate neurons of the caudal ventral respiratory group, giving rise to the sneezing response. Contributes to induction of acute itch, possibly through activation of the NMBR receptor on dorsal root ganglion neurons. Increases expression of NMBR and steroidogenic mediators STAR, CYP11A1 and HSD3B1 in Leydig cells, induces secretion of testosterone by Leydig cells and also promotes Leydig cell proliferation. Plays a role in the innate immune response to influenza A virus infection by enhancing interferon alpha expression and reducing expression of IL6. Plays a role in CSF1-induced proliferation of osteoclast precursors by contributing to the positive regulation of the expression of the CSF1 receptor CSF1R. This chain is Neuromedin-B (NMB), found in Bos taurus (Bovine).